The following is a 259-amino-acid chain: Eukaryotic translation initiation factor 4E1 (259 aa).

The segment at 1–70 is disordered; that stretch reads MQSDFHRMKN…TATTTAPAGD (70 aa). Positions 18–27 are enriched in polar residues; the sequence is FKTSAPSTEQ. Residues 41 to 51 are compositionally biased toward basic and acidic residues; that stretch reads EAKDVKPKEDP. Residues 54-70 show a composition bias toward low complexity; the sequence is TGEPAGNTATTTAPAGD. MRNA is bound by residues 100 to 101, 146 to 147, and 199 to 204; these read WE and RGKSNK.

This sequence belongs to the eukaryotic initiation factor 4E family. As to quaternary structure, eIF4F is a multi-subunit complex, the composition of which varies with external and internal environmental conditions. It is composed of at least eIF4A, eIF4E1 and eIF4G1. Recruited by cup in oocytes and in early embryos, preventing the interaction with eIF4G. The interaction with cup therefore prevents the translation of key transcripts such as oskar (osk) and nanos (nos) in some regions in the early embryo. Interacts with mxt. Interacts with 4E-T and Thor. Forms a RNP containing at least me31B, eIF4E1, cup, tral and pAbp; this interaction is required for the translational silencing of maternal mRNAs during the maternal-to-zygotic transition. Post-translationally, phosphorylation increases the ability of the protein to bind to mRNA caps and to form the eIF4F complex. As to expression, expressed at the posterior end of developing oocytes (at protein level). Preferential expression in the pole cells, at different developmental stages.

The protein resides in the cytoplasm. It localises to the cytoplasmic ribonucleoprotein granule. Its subcellular location is the nucleus. The protein localises to the nuclear body. Recognizes and binds the 7-methylguanosine (m7G)-containing mRNA cap during an early step in the initiation of protein synthesis and facilitates ribosome binding by inducing the unwinding of the mRNAs secondary structures. In 0-1 hour embryos, forms a complex with me31B, cup, tral and pAbp which binds to various mRNAs including maternal mRNAs, and down-regulates their expression during the maternal-to-zygotic transition. This chain is Eukaryotic translation initiation factor 4E1, found in Drosophila melanogaster (Fruit fly).